The sequence spans 154 residues: NADPH-dependent 7-cyano-7-deazaguanine reductase (154 aa).

Residue Cys54 is the Thioimide intermediate of the active site. Residue Asp61 is the Proton donor of the active site. Substrate contacts are provided by residues 76–78 (VES) and 95–96 (HE).

The protein belongs to the GTP cyclohydrolase I family. QueF type 1 subfamily.

It is found in the cytoplasm. The enzyme catalyses 7-aminomethyl-7-carbaguanine + 2 NADP(+) = 7-cyano-7-deazaguanine + 2 NADPH + 3 H(+). Its pathway is tRNA modification; tRNA-queuosine biosynthesis. Its function is as follows. Catalyzes the NADPH-dependent reduction of 7-cyano-7-deazaguanine (preQ0) to 7-aminomethyl-7-deazaguanine (preQ1). This chain is NADPH-dependent 7-cyano-7-deazaguanine reductase, found in Porphyromonas gingivalis (strain ATCC 33277 / DSM 20709 / CIP 103683 / JCM 12257 / NCTC 11834 / 2561).